The sequence spans 315 residues: Putative HTH-type transcriptional regulatory protein PH1808 (315 aa).

The HTH cro/C1-type domain occupies 131–189; that stretch reads LKALREEHGYSITELAGILGISRKSLQRYEKGESVVSLEVALRLEEVFDEPLVKPIDVL. The H-T-H motif DNA-binding region spans 142–161; the sequence is ITELAGILGISRKSLQRYEK.

In Pyrococcus horikoshii (strain ATCC 700860 / DSM 12428 / JCM 9974 / NBRC 100139 / OT-3), this protein is Putative HTH-type transcriptional regulatory protein PH1808.